A 436-amino-acid polypeptide reads, in one-letter code: Repulsive guidance molecule B (436 aa).

The first 48 residues, 1–48 (MGVRAAPSCAAAPAAAGAEQSRRPGLWPPSPPPPLLLLLLLSLGLLHA), serve as a signal peptide directing secretion. An N-linked (GlcNAc...) asparagine glycan is attached at Asn123. Disulfide bonds link Cys142/Cys229 and Cys166/Cys315. N-linked (GlcNAc...) asparagine glycosylation occurs at Asn386. Cys415 is lipidated: GPI-anchor amidated cysteine. Positions 416-436 (GGCRDLPVGLGLTCLILIMFL) are cleaved as a propeptide — removed in mature form.

Belongs to the repulsive guidance molecule (RGM) family. As to quaternary structure, homooligomer. Interacts with DRGX. Interacts with BMP2 and BMP4. Interacts with the BMP type I receptors ACVR1, BMPR1A and BMPR1B and with the BMP type II receptor ACVR2B. The functional complex with its receptor NEO1/neogenin appears to be a heterotetramer with a 2:2 stoichiometry, RGM molecules acting as staples that bring two NEO1 receptors together without interacting themselves, this arrangement leads to activation of downstream signaling via RhoA. GPI-anchored. In terms of processing, autocatalytically cleaved at low pH; the two chains remain linked via two disulfide bonds. Detected in neonatal and adult dorsal root ganglion sensory neurons, spinal cord, and brain (at protein level). Also expressed at high levels in retinal ganglion cells of developing mouse, extending to the optic nerve (at protein level). Expressed in testis, epididymis, ovary, uterus, and pituitary.

Its subcellular location is the cell membrane. The protein localises to the membrane raft. Member of the repulsive guidance molecule (RGM) family that contributes to the patterning of the developing nervous system. Acts as a bone morphogenetic protein (BMP) coreceptor that potentiates BMP signaling. Promotes neuronal adhesion. May inhibit neurite outgrowth. The sequence is that of Repulsive guidance molecule B from Mus musculus (Mouse).